We begin with the raw amino-acid sequence, 223 residues long: ATP synthase subunit a 1 (223 aa).

5 helical membrane passes run 20-40 (QTIVMTWVIMVFLAGGSAFLT), 78-98 (YLSYLATLFLFVATAVLFTII), 107-127 (SLSTTAALALSVFVAVPLYGI), 173-193 (VMIIGILLGIAPLFFPVLMSV), and 194-214 (LGLLTGMVQAYIFSMLATVYI).

Belongs to the ATPase A chain family. As to quaternary structure, F-type ATPases have 2 components, CF(1) - the catalytic core - and CF(0) - the membrane proton channel. CF(1) has five subunits: alpha(3), beta(3), gamma(1), delta(1), epsilon(1). CF(0) has four main subunits: a, b, b' and c.

The protein localises to the cell inner membrane. Its function is as follows. Key component of the proton channel; it plays a direct role in the translocation of protons across the membrane. The polypeptide is ATP synthase subunit a 1 (Prosthecochloris aestuarii (strain DSM 271 / SK 413)).